The primary structure comprises 194 residues: dCTP deaminase, dUMP-forming (194 aa).

Residues 104 to 109, Asp-122, 130 to 132, Gln-151, Tyr-165, Lys-172, and Gln-176 contribute to the dCTP site; these read RSSLGR and TLE. Glu-132 acts as the Proton donor/acceptor in catalysis.

The protein belongs to the dCTP deaminase family. In terms of assembly, homotrimer.

The enzyme catalyses dCTP + 2 H2O = dUMP + NH4(+) + diphosphate. It participates in pyrimidine metabolism; dUMP biosynthesis; dUMP from dCTP: step 1/1. Its function is as follows. Bifunctional enzyme that catalyzes both the deamination of dCTP to dUTP and the hydrolysis of dUTP to dUMP without releasing the toxic dUTP intermediate. The polypeptide is dCTP deaminase, dUMP-forming (Dictyoglomus turgidum (strain DSM 6724 / Z-1310)).